The chain runs to 114 residues: T cell receptor beta variable 5-6 (114 aa).

A signal peptide spans 1-21; the sequence is MGPGLLCWALLCLLGAGLVDA. The 93-residue stretch at 22-114 folds into the Ig-like domain; sequence GVTQSPTHLI…SALYLCASSL (93 aa). The cysteines at positions 42 and 110 are disulfide-linked. Asparagine 90 carries N-linked (GlcNAc...) asparagine glycosylation.

Alpha-beta TR is a heterodimer composed of an alpha and beta chain; disulfide-linked. The alpha-beta TR is associated with the transmembrane signaling CD3 coreceptor proteins to form the TR-CD3 (TcR or TCR). The assembly of alpha-beta TR heterodimers with CD3 occurs in the endoplasmic reticulum where a single alpha-beta TR heterodimer associates with one CD3D-CD3E heterodimer, one CD3G-CD3E heterodimer and one CD247 homodimer forming a stable octameric structure. CD3D-CD3E and CD3G-CD3E heterodimers preferentially associate with TR alpha and TR beta chains, respectively. The association of the CD247 homodimer is the last step of TcR assembly in the endoplasmic reticulum and is required for transport to the cell surface.

Its subcellular location is the cell membrane. Its function is as follows. V region of the variable domain of T cell receptor (TR) beta chain that participates in the antigen recognition. Alpha-beta T cell receptors are antigen specific receptors which are essential to the immune response and are present on the cell surface of T lymphocytes. Recognize peptide-major histocompatibility (MH) (pMH) complexes that are displayed by antigen presenting cells (APC), a prerequisite for efficient T cell adaptive immunity against pathogens. Binding of alpha-beta TR to pMH complex initiates TR-CD3 clustering on the cell surface and intracellular activation of LCK that phosphorylates the ITAM motifs of CD3G, CD3D, CD3E and CD247 enabling the recruitment of ZAP70. In turn ZAP70 phosphorylates LAT, which recruits numerous signaling molecules to form the LAT signalosome. The LAT signalosome propagates signal branching to three major signaling pathways, the calcium, the mitogen-activated protein kinase (MAPK) kinase and the nuclear factor NF-kappa-B (NF-kB) pathways, leading to the mobilization of transcription factors that are critical for gene expression and essential for T cell growth and differentiation. The T cell repertoire is generated in the thymus, by V-(D)-J rearrangement. This repertoire is then shaped by intrathymic selection events to generate a peripheral T cell pool of self-MH restricted, non-autoaggressive T cells. Post-thymic interaction of alpha-beta TR with the pMH complexes shapes TR structural and functional avidity. In Homo sapiens (Human), this protein is T cell receptor beta variable 5-6.